A 332-amino-acid chain; its full sequence is 3'(2'),5'-bisphosphate nucleotidase (332 aa).

Asp-49 serves as the catalytic Proton acceptor. Residues Glu-73, Asp-129, Ile-131, and Asp-132 each contribute to the Mg(2+) site. The active-site Proton acceptor is Thr-134. Adenosine 3',5'-bisphosphate contacts are provided by Thr-134, Ser-245, Lys-248, Arg-262, and Asp-274. AMP contacts are provided by Ser-245, Lys-248, Arg-262, and Asp-274. Asp-274 contacts Mg(2+).

Belongs to the inositol monophosphatase superfamily. It depends on Mg(2+) as a cofactor.

The catalysed reaction is 3'-phosphoadenylyl sulfate + H2O = adenosine 5'-phosphosulfate + phosphate. The enzyme catalyses adenosine 3',5'-bisphosphate + H2O = AMP + phosphate. It catalyses the reaction adenosine 2',5'-bisphosphate + H2O = AMP + phosphate. It carries out the reaction 1D-myo-inositol 1,4-bisphosphate + H2O = 1D-myo-inositol 4-phosphate + phosphate. The catalysed reaction is 1D-myo-inositol 1,3,4-trisphosphate + H2O = 1D-myo-inositol 3,4-bisphosphate + phosphate. Its function is as follows. Phosphatase that converts adenosine 3'-phosphate 5'-phosphosulfate (PAPS) to adenosine 5'-phosphosulfate (APS) and 3'(2')-phosphoadenosine 5'-phosphate (PAP) to AMP. Is also able to hydrolyze inositol 1,4-bisphosphate and inositol 1,3,4-trisphosphate. In Dictyostelium discoideum (Social amoeba), this protein is 3'(2'),5'-bisphosphate nucleotidase.